We begin with the raw amino-acid sequence, 207 residues long: 3-isopropylmalate dehydratase small subunit (207 aa).

This sequence belongs to the LeuD family. LeuD type 1 subfamily. As to quaternary structure, heterodimer of LeuC and LeuD.

It carries out the reaction (2R,3S)-3-isopropylmalate = (2S)-2-isopropylmalate. The protein operates within amino-acid biosynthesis; L-leucine biosynthesis; L-leucine from 3-methyl-2-oxobutanoate: step 2/4. Functionally, catalyzes the isomerization between 2-isopropylmalate and 3-isopropylmalate, via the formation of 2-isopropylmaleate. The chain is 3-isopropylmalate dehydratase small subunit from Rhodospirillum rubrum (strain ATCC 11170 / ATH 1.1.1 / DSM 467 / LMG 4362 / NCIMB 8255 / S1).